An 83-amino-acid chain; its full sequence is Small ribosomal subunit protein uS17 (83 aa).

It belongs to the universal ribosomal protein uS17 family. In terms of assembly, part of the 30S ribosomal subunit.

In terms of biological role, one of the primary rRNA binding proteins, it binds specifically to the 5'-end of 16S ribosomal RNA. This chain is Small ribosomal subunit protein uS17, found in Campylobacter jejuni subsp. jejuni serotype O:6 (strain 81116 / NCTC 11828).